The sequence spans 114 residues: Neurotrophic factor BDNF precursor form (114 aa).

Intrachain disulfides connect Cys14/Cys81, Cys59/Cys110, and Cys69/Cys112.

It belongs to the NGF-beta family.

The protein resides in the secreted. Functionally, promotes the survival of neuronal populations that are all located either in the central nervous system or directly connected to it. This Xenopus laevis (African clawed frog) protein is Neurotrophic factor BDNF precursor form (bdnf).